A 179-amino-acid chain; its full sequence is Probable chorismate pyruvate-lyase (179 aa).

Substrate is bound by residues arginine 82, leucine 120, and glutamate 165.

This sequence belongs to the UbiC family.

Its subcellular location is the cytoplasm. The enzyme catalyses chorismate = 4-hydroxybenzoate + pyruvate. Its pathway is cofactor biosynthesis; ubiquinone biosynthesis. Removes the pyruvyl group from chorismate, with concomitant aromatization of the ring, to provide 4-hydroxybenzoate (4HB) for the ubiquinone pathway. The sequence is that of Probable chorismate pyruvate-lyase from Vibrio vulnificus (strain YJ016).